A 122-amino-acid polypeptide reads, in one-letter code: WUSCHEL-related homeobox 7 (122 aa).

A DNA-binding region (homeobox; WUS-type) is located at residues 25–89; that stretch reads AKCGRWNPTV…NHKARERQKC (65 aa). Residues 98–111 show a composition bias toward basic and acidic residues; that stretch reads DHRQDTDLSKPRRD. The interval 98–122 is disordered; that stretch reads DHRQDTDLSKPRRDNVRRHQLPAKG. Basic residues predominate over residues 112–122; that stretch reads NVRRHQLPAKG.

This sequence belongs to the WUS homeobox family.

Its subcellular location is the nucleus. Functionally, potential transcription factor that plays a central role during developmental processes. This chain is WUSCHEL-related homeobox 7 (WOX7), found in Arabidopsis thaliana (Mouse-ear cress).